The following is a 500-amino-acid chain: Glutamate--tRNA ligase (500 aa).

Positions 12 to 22 (PSPTGHLHIGN) match the 'HIGH' region motif. A 'KMSKS' region motif is present at residues 259–263 (KLSKR). K262 is an ATP binding site.

It belongs to the class-I aminoacyl-tRNA synthetase family. Glutamate--tRNA ligase type 1 subfamily. In terms of assembly, monomer.

The protein localises to the cytoplasm. The enzyme catalyses tRNA(Glu) + L-glutamate + ATP = L-glutamyl-tRNA(Glu) + AMP + diphosphate. In terms of biological role, catalyzes the attachment of glutamate to tRNA(Glu) in a two-step reaction: glutamate is first activated by ATP to form Glu-AMP and then transferred to the acceptor end of tRNA(Glu). This Lactobacillus delbrueckii subsp. bulgaricus (strain ATCC 11842 / DSM 20081 / BCRC 10696 / JCM 1002 / NBRC 13953 / NCIMB 11778 / NCTC 12712 / WDCM 00102 / Lb 14) protein is Glutamate--tRNA ligase.